Reading from the N-terminus, the 116-residue chain is Large ribosomal subunit protein bL17 (116 aa).

Belongs to the bacterial ribosomal protein bL17 family. Part of the 50S ribosomal subunit. Contacts protein L32.

The chain is Large ribosomal subunit protein bL17 from Prochlorococcus marinus (strain MIT 9211).